Here is a 288-residue protein sequence, read N- to C-terminus: Stomatin (288 aa).

The tract at residues 1 to 22 is disordered; the sequence is MAEKRHTRDSEAQRLPDSFKDS. Over 1–25 the chain is Cytoplasmic; it reads MAEKRHTRDSEAQRLPDSFKDSPSK. The residue at position 10 (Ser-10) is a Phosphoserine; by PKA. Ser-18 carries the phosphoserine modification. The stretch at 26-54 is an intramembrane region; it reads GLGPCGWILVAFSFLFTVITFPISIWMCI. Cys-30 is lipidated: S-palmitoyl cysteine. Residues 55-288 are Cytoplasmic-facing; sequence KIIKEYERAI…IIGAKHSHLG (234 aa). Residue Cys-87 is the site of S-palmitoyl cysteine; partial attachment. Ser-161 and Ser-244 each carry phosphoserine. The required for homooligomerization stretch occupies residues 265–273; the sequence is STIVFPLPI. The segment at 267 to 269 is required for lipid raft association; the sequence is IVF. The interval 273–287 is interaction with LANCL1; it reads IDMLQGIIGAKHSHL.

It belongs to the band 7/mec-2 family. In terms of assembly, homodimer and higher order homooligomer. The homodimer is banana-shaped. Interacts with ASIC1, ASIC2 and ASIC3. Interacts with LANCL1. Interacts with SLC2A1. Interacts with SLC4A1; this interaction positively regulates SLC4A1 activity. Identified in large complexes with SLC40A1, SLC14A1, SLC29A1 and AQP1. Interacts with STOML1; may redistribute STOM from the plasma membrane to late endosomes. In terms of tissue distribution, detected in erythrocytes (at protein level). Widely expressed.

The protein resides in the cell membrane. Its subcellular location is the cytoplasm. It localises to the cytoskeleton. The protein localises to the membrane raft. It is found in the melanosome. The protein resides in the cytoplasmic vesicle. Regulates ion channel activity and transmembrane ion transport. Regulates ASIC2 and ASIC3 channel activity. The chain is Stomatin from Homo sapiens (Human).